The chain runs to 177 residues: Protein GrpE (177 aa).

2 stretches are compositionally biased toward basic and acidic residues: residues 1–19 (MAKHKHEEHPEDVEVKETV) and 29–41 (SPEKSELELANER). The tract at residues 1 to 41 (MAKHKHEEHPEDVEVKETVETAEQAESASPEKSELELANER) is disordered.

Belongs to the GrpE family. Homodimer.

Its subcellular location is the cytoplasm. Its function is as follows. Participates actively in the response to hyperosmotic and heat shock by preventing the aggregation of stress-denatured proteins, in association with DnaK and GrpE. It is the nucleotide exchange factor for DnaK and may function as a thermosensor. Unfolded proteins bind initially to DnaJ; upon interaction with the DnaJ-bound protein, DnaK hydrolyzes its bound ATP, resulting in the formation of a stable complex. GrpE releases ADP from DnaK; ATP binding to DnaK triggers the release of the substrate protein, thus completing the reaction cycle. Several rounds of ATP-dependent interactions between DnaJ, DnaK and GrpE are required for fully efficient folding. This is Protein GrpE from Streptococcus gordonii (strain Challis / ATCC 35105 / BCRC 15272 / CH1 / DL1 / V288).